The primary structure comprises 117 residues: MDMRVPAQLLGLLLLWLPGVRFDIQMTQSPSFLSASVGDRVSIICWASEGISSNLAWYLQKPGKSPKLFLYDAKDLHPGVSSRFSGRGSGTDFTLTIISLKPEDFAAYYCKQDFSYP.

Positions 1–22 (MDMRVPAQLLGLLLLWLPGVRF) are cleaved as a signal peptide. Residues 23–45 (DIQMTQSPSFLSASVGDRVSIIC) form a framework-1 region. Residues 23-117 (DIQMTQSPSF…YYCKQDFSYP (95 aa)) enclose the Ig-like domain. A disulfide bridge connects residues cysteine 45 and cysteine 110. The interval 46 to 56 (WASEGISSNLA) is complementarity-determining-1. The framework-2 stretch occupies residues 57-71 (WYLQKPGKSPKLFLY). Residues 72 to 78 (DAKDLHP) are complementarity-determining-2. The tract at residues 79-110 (GVSSRFSGRGSGTDFTLTIISLKPEDFAAYYC) is framework-3. A complementarity-determining-3 region spans residues 111–117 (KQDFSYP).

In terms of assembly, immunoglobulins are composed of two identical heavy chains and two identical light chains; disulfide-linked.

The protein localises to the secreted. The protein resides in the cell membrane. Functionally, probable non-functional open reading frame (ORF) of V region of the variable domain of immunoglobulin light chains. Non-functional ORF generally cannot participate in the synthesis of a productive immunoglobulin chain due to altered V-(D)-J or switch recombination and/or splicing site (at mRNA level) and/or conserved amino acid change (protein level). Immunoglobulins, also known as antibodies, are membrane-bound or secreted glycoproteins produced by B lymphocytes. In the recognition phase of humoral immunity, the membrane-bound immunoglobulins serve as receptors which, upon binding of a specific antigen, trigger the clonal expansion and differentiation of B lymphocytes into immunoglobulins-secreting plasma cells. Secreted immunoglobulins mediate the effector phase of humoral immunity, which results in the elimination of bound antigens. The antigen binding site is formed by the variable domain of one heavy chain, together with that of its associated light chain. Thus, each immunoglobulin has two antigen binding sites with remarkable affinity for a particular antigen. The variable domains are assembled by a process called V-(D)-J rearrangement and can then be subjected to somatic hypermutations which, after exposure to antigen and selection, allow affinity maturation for a particular antigen. This Homo sapiens (Human) protein is Probable non-functional immunoglobulin kappa variable 1D-42.